The primary structure comprises 383 residues: BRISC and BRCA1-A complex member 2 (383 aa).

Residue Met1 is modified to N-acetylmethionine. Residue Ser2 is modified to Phosphoserine. UEV-like regions lie at residues 30–147 and 275–364; these read DATN…TLLE and IAAF…RAKA.

Belongs to the BABAM2 family. As to quaternary structure, component of the ARISC complex, at least composed of UIMC1/RAP80, ABRAXAS1, BRCC3/BRCC36, BABAM2 and BABAM1/NBA1. Component of the BRCA1-A complex, at least composed of BRCA1, BARD1, UIMC1/RAP80, ABRAXAS1, BRCC3/BRCC36, BABAM2 and BABAM1/NBA1. In the BRCA1-A complex, interacts directly with ABRAXAS1, BRCC3/BRCC36 and BABAM1/NBA1. Binds polyubiquitin. Component of the BRISC complex, at least composed of ABRAXAS2, BRCC3/BRCC36, BABAM2 and BABAM1/NBA1. Identified in a complex with SHMT2 and the other subunits of the BRISC complex. Component of the BRCA1/BRCA2 containing complex (BRCC), which also contains BRCA1, BRCA2, BARD1, BRCC3/BRCC36 and RAD51. BRCC is a ubiquitin E3 ligase complex that enhances cellular survival following DNA damage. May interact with FAS and TNFRSF1A.

The protein resides in the cytoplasm. Its subcellular location is the nucleus. Component of the BRCA1-A complex, a complex that specifically recognizes 'Lys-63'-linked ubiquitinated histones H2A and H2AX at DNA lesions sites, leading to target the BRCA1-BARD1 heterodimer to sites of DNA damage at double-strand breaks (DSBs). The BRCA1-A complex also possesses deubiquitinase activity that specifically removes 'Lys-63'-linked ubiquitin on histones H2A and H2AX. In the BRCA1-A complex, it acts as an adapter that bridges the interaction between BABAM1/NBA1 and the rest of the complex, thereby being required for the complex integrity and modulating the E3 ubiquitin ligase activity of the BRCA1-BARD1 heterodimer. Component of the BRISC complex, a multiprotein complex that specifically cleaves 'Lys-63'-linked ubiquitin in various substrates. Within the BRISC complex, acts as an adapter that bridges the interaction between BABAM1/NBA1 and the rest of the complex, thereby being required for the complex integrity. The BRISC complex is required for normal mitotic spindle assembly and microtubule attachment to kinetochores via its role in deubiquitinating NUMA1. The BRISC complex plays a role in interferon signaling via its role in the deubiquitination of the interferon receptor IFNAR1; deubiquitination increases IFNAR1 activity by enhancing its stability and cell surface expression. Down-regulates the response to bacterial lipopolysaccharide (LPS) via its role in IFNAR1 deubiquitination. May play a role in homeostasis or cellular differentiation in cells of neural, epithelial and germline origins. May also act as a death receptor-associated anti-apoptotic protein, which inhibits the mitochondrial apoptotic pathway. May regulate TNF-alpha signaling through its interactions with TNFRSF1A; however these effects may be indirect. The chain is BRISC and BRCA1-A complex member 2 from Rattus norvegicus (Rat).